The sequence spans 314 residues: Dihydropteroate synthase (314 aa).

The Pterin-binding domain occupies 10 to 294 (TVICGIINVT…DVASHRMAVE (285 aa)). Asn17 lines the Mg(2+) pocket. Residues Thr57, Asp91, Asn110, Asp201, Lys237, and 282 to 284 (RVH) contribute to the (7,8-dihydropterin-6-yl)methyl diphosphate site.

It belongs to the DHPS family. Homodimer or homotrimer. Mg(2+) is required as a cofactor.

The enzyme catalyses (7,8-dihydropterin-6-yl)methyl diphosphate + 4-aminobenzoate = 7,8-dihydropteroate + diphosphate. The protein operates within cofactor biosynthesis; tetrahydrofolate biosynthesis; 7,8-dihydrofolate from 2-amino-4-hydroxy-6-hydroxymethyl-7,8-dihydropteridine diphosphate and 4-aminobenzoate: step 1/2. Catalyzes the condensation of para-aminobenzoate (pABA) with 6-hydroxymethyl-7,8-dihydropterin diphosphate (DHPt-PP) to form 7,8-dihydropteroate (H2Pte), the immediate precursor of folate derivatives. The chain is Dihydropteroate synthase (sulA) from Streptococcus pneumoniae serotype 4 (strain ATCC BAA-334 / TIGR4).